The chain runs to 609 residues: Granule-bound starch synthase 1, chloroplastic/amyloplastic (609 aa).

Residues 1–77 (MSALTTSQLA…SRRFPSVVVY (77 aa)) constitute a chloroplast transit peptide. The tract at residues 29–67 (RHGFQGLKPRSPAGGDATSLSVTTSARATPKQQRSVQRG) is disordered. Positions 46–66 (TSLSVTTSARATPKQQRSVQR) are enriched in polar residues. K97 provides a ligand contact to ADP-alpha-D-glucose.

Belongs to the glycosyltransferase 1 family. Bacterial/plant glycogen synthase subfamily.

The protein resides in the plastid. It is found in the chloroplast. Its subcellular location is the amyloplast. The catalysed reaction is an NDP-alpha-D-glucose + [(1-&gt;4)-alpha-D-glucosyl](n) = [(1-&gt;4)-alpha-D-glucosyl](n+1) + a ribonucleoside 5'-diphosphate + H(+). The protein operates within glycan biosynthesis; starch biosynthesis. Functionally, required for the synthesis of amylose in endosperm. The protein is Granule-bound starch synthase 1, chloroplastic/amyloplastic (WAXY) of Oryza glaberrima (African rice).